The sequence spans 230 residues: Carbohydrate deacetylase (230 aa).

Mg(2+)-binding residues include His59 and His123.

Belongs to the YdjC deacetylase family. In terms of assembly, homodimer. Mg(2+) serves as cofactor.

Its function is as follows. Probably catalyzes the deacetylation of acetylated carbohydrates an important step in the degradation of oligosaccharides. This Oceanobacillus iheyensis (strain DSM 14371 / CIP 107618 / JCM 11309 / KCTC 3954 / HTE831) protein is Carbohydrate deacetylase.